The following is a 103-amino-acid chain: MLTKITFFERFEPGILSGAKTITLRDEAESHVFAGQILPVSTFEADRWFCDIEVIDIVPVLFSALTEQHAAQENMTLPELRRVIQEIYPGLEQLFQIRFCLVQ.

The ASCH domain maps to 6–92 (TFFERFEPGI…VIQEIYPGLE (87 aa)). K20 functions as the Proton acceptor in the catalytic mechanism. The Nucleophile role is filled by T23. The active-site Proton donor is E73.

This sequence belongs to the N(4)-acetylcytidine amidohydrolase family.

The catalysed reaction is N(4)-acetylcytidine + H2O = cytidine + acetate + H(+). The enzyme catalyses N(4)-acetyl-2'-deoxycytidine + H2O = 2'-deoxycytidine + acetate + H(+). It catalyses the reaction N(4)-acetylcytosine + H2O = cytosine + acetate + H(+). In terms of biological role, catalyzes the hydrolysis of N(4)-acetylcytidine (ac4C). In Shewanella sp. (strain MR-7), this protein is N(4)-acetylcytidine amidohydrolase.